A 497-amino-acid chain; its full sequence is Zinc finger protein ZIC 2-B (497 aa).

Disordered stretches follow at residues 58-107 (HMGA…TSQA) and 143-180 (SAAAGGGQHGLFGPPAGSLHHHPHHHHQLSHGEHPQGH). Over residues 66–88 (PGGGSGGGSGGGGGAGPNGGAGA) the composition is skewed to gly residues. The segment covering 97–107 (PGQTSAFTSQA) has biased composition (polar residues). Residues 161-171 (LHHHPHHHHQL) are compositionally biased toward basic residues. The C2H2-type 1; atypical zinc finger occupies 273–308 (LICKWIDPEQLNNPKKSCNKTFSTMHELVTHMSVEH). The C2H2-type 2; atypical zinc finger occupies 317-344 (HICFWEECAREGKPFKAKYKLVNHIRVH). C2H2-type zinc fingers lie at residues 350 to 374 (FPCPFPGCGKVFARSENLKIHKRTH), 380 to 404 (FQCEFEGCDRRFANSSDRKKHMHVH), and 410 to 432 (YLCKMCDKSYTHPSSLRKHMKVH). The tract at residues 423 to 473 (SSLRKHMKVHESSPQGSESSPAASSGYESSTPPGLVSPNSETQNPNLSPAA) is disordered. Residues 434–452 (SSPQGSESSPAASSGYESS) show a composition bias toward low complexity. The span at 459–469 (SPNSETQNPNL) shows a compositional bias: polar residues.

Belongs to the GLI C2H2-type zinc-finger protein family.

It is found in the nucleus. Its subcellular location is the cytoplasm. Functionally, transcriptional repressor that inhibits neurogenesis and induces neural and neural crest differentiation. Regulates anteroposterior patterning in early development by inhibiting expression of the nodal genes through the inhibition of vegt. Required for gastrulation movements and for proper anterior neural and axial development. May also act as a transcriptional activator. May bind to the minimal GLI-consensus sequence 5'-TGGGTGGTC-3'. This is Zinc finger protein ZIC 2-B (zic2-b) from Xenopus laevis (African clawed frog).